An 870-amino-acid chain; its full sequence is Linoleate 9S-lipoxygenase 2 (870 aa).

A PLAT domain is found at 32–158; the sequence is NDFGATVIDG…KYRYNRVFFS (127 aa). One can recognise a Lipoxygenase domain in the interval 161–870; it reads TSLPSKMPAA…ARGIPNSISI (710 aa). Residues 203 to 243 form a disordered region; it reads YNDLGEPDSGNPRPVLGGSPDRPYPRRGRTGRKPTKTDPTA. The segment covering 227–236 has biased composition (basic residues); that stretch reads PRRGRTGRKP. Fe cation is bound by residues H525, H530, H716, N720, and I870.

The protein belongs to the lipoxygenase family. In terms of assembly, monomer. Requires Fe cation as cofactor.

The protein resides in the cytoplasm. It carries out the reaction (9Z,12Z)-octadecadienoate + O2 = (9S)-hydroperoxy-(10E,12Z)-octadecadienoate. It functions in the pathway lipid metabolism; oxylipin biosynthesis. In terms of biological role, plant lipoxygenase may be involved in a number of diverse aspects of plant physiology including growth and development, pest resistance, and senescence or responses to wounding. Catalyzes the hydroperoxidation of lipids containing a cis,cis-1,4-pentadiene structure. The polypeptide is Linoleate 9S-lipoxygenase 2 (LOX1.1) (Oryza sativa subsp. japonica (Rice)).